We begin with the raw amino-acid sequence, 176 residues long: Adenylyl-sulfate kinase (176 aa).

12-19 provides a ligand contact to ATP; the sequence is GLSGAGKT. Residue S86 is the Phosphoserine intermediate of the active site.

Belongs to the APS kinase family.

The catalysed reaction is adenosine 5'-phosphosulfate + ATP = 3'-phosphoadenylyl sulfate + ADP + H(+). Its pathway is sulfur metabolism; hydrogen sulfide biosynthesis; sulfite from sulfate: step 2/3. In terms of biological role, catalyzes the synthesis of activated sulfate. This chain is Adenylyl-sulfate kinase, found in Synechococcus sp. (strain JA-3-3Ab) (Cyanobacteria bacterium Yellowstone A-Prime).